A 238-amino-acid chain; its full sequence is Urease accessory protein UreG (238 aa).

A compositionally biased stretch (basic and acidic residues) spans 1 to 15; the sequence is MPPHLIDGEPHDHAH. Residues 1–27 are disordered; sequence MPPHLIDGEPHDHAHDRPKRQRTPGEP. 34-41 contributes to the GTP binding site; the sequence is GPVGSGKT.

It belongs to the SIMIBI class G3E GTPase family. UreG subfamily. As to quaternary structure, homodimer. UreD, UreF and UreG form a complex that acts as a GTP-hydrolysis-dependent molecular chaperone, activating the urease apoprotein by helping to assemble the nickel containing metallocenter of UreC. The UreE protein probably delivers the nickel.

It localises to the cytoplasm. Facilitates the functional incorporation of the urease nickel metallocenter. This process requires GTP hydrolysis, probably effectuated by UreG. This chain is Urease accessory protein UreG, found in Nocardia farcinica (strain IFM 10152).